A 115-amino-acid chain; its full sequence is Dolichyl-diphosphooligosaccharide--protein glycosyltransferase subunit DAD1 (115 aa).

The Cytoplasmic portion of the chain corresponds to 1–31 (MARSTSKDAQALIQSLRSAYAATPSNLKIID). A helical transmembrane segment spans residues 32–52 (LYVVFAVFTALIQVVYMAIVG). The Lumenal portion of the chain corresponds to 53-55 (SFP). Residues 56-76 (FNAFLSGLLSCIGTAVLAVCL) traverse the membrane as a helical segment. Residues 77-94 (RIQVNKENKEFKDLAPER) lie on the Cytoplasmic side of the membrane. A helical membrane pass occupies residues 95–115 (AFADFVLCNLVLHLVIMNFLG).

Belongs to the DAD/OST2 family. As to quaternary structure, component of the oligosaccharyltransferase (OST) complex.

Its subcellular location is the endoplasmic reticulum membrane. It participates in protein modification; protein glycosylation. In terms of biological role, subunit of the oligosaccharyl transferase (OST) complex that catalyzes the initial transfer of a defined glycan (Glc(3)Man(9)GlcNAc(2) in eukaryotes) from the lipid carrier dolichol-pyrophosphate to an asparagine residue within an Asn-X-Ser/Thr consensus motif in nascent polypeptide chains, the first step in protein N-glycosylation. N-glycosylation occurs cotranslationally and the complex associates with the Sec61 complex at the channel-forming translocon complex that mediates protein translocation across the endoplasmic reticulum (ER). All subunits are required for a maximal enzyme activity. This chain is Dolichyl-diphosphooligosaccharide--protein glycosyltransferase subunit DAD1 (DAD1), found in Betula pendula (European white birch).